The primary structure comprises 341 residues: Undecaprenyl-phosphate 4-deoxy-4-formamido-L-arabinose transferase (341 aa).

The next 2 helical transmembrane spans lie at 235–255 (LSIV…ALIV) and 269–289 (LFVL…GMGL).

The protein belongs to the glycosyltransferase 2 family.

The protein localises to the cell inner membrane. It carries out the reaction UDP-4-deoxy-4-formamido-beta-L-arabinose + di-trans,octa-cis-undecaprenyl phosphate = 4-deoxy-4-formamido-alpha-L-arabinopyranosyl di-trans,octa-cis-undecaprenyl phosphate + UDP. It participates in glycolipid biosynthesis; 4-amino-4-deoxy-alpha-L-arabinose undecaprenyl phosphate biosynthesis; 4-amino-4-deoxy-alpha-L-arabinose undecaprenyl phosphate from UDP-4-deoxy-4-formamido-beta-L-arabinose and undecaprenyl phosphate: step 1/2. The protein operates within bacterial outer membrane biogenesis; lipopolysaccharide biosynthesis. In terms of biological role, catalyzes the transfer of 4-deoxy-4-formamido-L-arabinose from UDP to undecaprenyl phosphate. The modified arabinose is attached to lipid A and is required for resistance to polymyxin and cationic antimicrobial peptides. This is Undecaprenyl-phosphate 4-deoxy-4-formamido-L-arabinose transferase from Pseudomonas fluorescens (strain SBW25).